A 375-amino-acid chain; its full sequence is Serine protease 23 (375 aa).

Residues 1–23 (MAGTPGHPIFLLLLLRAIGQVSP) form the signal peptide. N-linked (GlcNAc...) asparagine glycosylation occurs at Asn-93. The cysteines at positions 153 and 169 are disulfide-linked. His-168 (charge relay system) is an active-site residue. Asn-199 carries N-linked (GlcNAc...) asparagine glycosylation. Residues Asp-232 and Ser-308 each act as charge relay system in the active site.

This sequence belongs to the peptidase S1 family.

The protein localises to the secreted. This is Serine protease 23 (PRSS23) from Bos taurus (Bovine).